A 186-amino-acid chain; its full sequence is Protein GrpE (186 aa).

Basic and acidic residues-rich tracts occupy residues 1–13 (MSDN…EEQH) and 23–34 (EETHQAEDAVEH). Residues 1 to 34 (MSDNKTELNEEQHNATAEGEVSEETHQAEDAVEH) are disordered.

This sequence belongs to the GrpE family. In terms of assembly, homodimer.

Its subcellular location is the cytoplasm. Functionally, participates actively in the response to hyperosmotic and heat shock by preventing the aggregation of stress-denatured proteins, in association with DnaK and GrpE. It is the nucleotide exchange factor for DnaK and may function as a thermosensor. Unfolded proteins bind initially to DnaJ; upon interaction with the DnaJ-bound protein, DnaK hydrolyzes its bound ATP, resulting in the formation of a stable complex. GrpE releases ADP from DnaK; ATP binding to DnaK triggers the release of the substrate protein, thus completing the reaction cycle. Several rounds of ATP-dependent interactions between DnaJ, DnaK and GrpE are required for fully efficient folding. The sequence is that of Protein GrpE from Hydrogenovibrio crunogenus (strain DSM 25203 / XCL-2) (Thiomicrospira crunogena).